A 223-amino-acid polypeptide reads, in one-letter code: Ras-related protein RABA4c (223 aa).

Residue G22–S29 coordinates GTP. An Effector region motif is present at residues S44–F52. GTP contacts are provided by residues D70–Q74, N128–D131, and S158–A159. 2 S-geranylgeranyl cysteine lipidation sites follow: C219 and C220.

Belongs to the small GTPase superfamily. Rab family.

It localises to the cell membrane. Its function is as follows. Intracellular vesicle trafficking and protein transport. This chain is Ras-related protein RABA4c (RABA4C), found in Arabidopsis thaliana (Mouse-ear cress).